Consider the following 517-residue polypeptide: 2,3-bisphosphoglycerate-independent phosphoglycerate mutase (517 aa).

The Mn(2+) site is built by Asp-14 and Ser-64. The active-site Phosphoserine intermediate is the Ser-64. Substrate-binding positions include His-125, 155-156, Arg-187, Arg-193, 259-262, and Lys-334; these read RD and RPDR. Asp-401, His-405, Asp-442, His-443, and His-461 together coordinate Mn(2+).

The protein belongs to the BPG-independent phosphoglycerate mutase family. Monomer. Mn(2+) serves as cofactor.

It catalyses the reaction (2R)-2-phosphoglycerate = (2R)-3-phosphoglycerate. The protein operates within carbohydrate degradation; glycolysis; pyruvate from D-glyceraldehyde 3-phosphate: step 3/5. In terms of biological role, catalyzes the interconversion of 2-phosphoglycerate and 3-phosphoglycerate. This chain is 2,3-bisphosphoglycerate-independent phosphoglycerate mutase, found in Symbiobacterium thermophilum (strain DSM 24528 / JCM 14929 / IAM 14863 / T).